A 359-amino-acid chain; its full sequence is GDSL esterase/lipase At2g30310 (359 aa).

The first 28 residues, 1–28, serve as a signal peptide directing secretion; that stretch reads MSTSKTIVFGLFVATLLVSCNVAANATT. Ser41 serves as the catalytic Nucleophile. Residues Asn103 and Asn325 are each glycosylated (N-linked (GlcNAc...) asparagine). Active-site residues include Asp333 and His336.

It belongs to the 'GDSL' lipolytic enzyme family.

The protein resides in the secreted. The polypeptide is GDSL esterase/lipase At2g30310 (Arabidopsis thaliana (Mouse-ear cress)).